We begin with the raw amino-acid sequence, 447 residues long: GTPase Der (447 aa).

EngA-type G domains follow at residues 4–165 (KIIT…PEEE) and 180–357 (LQIV…KIWN). Residues 10 to 17 (GRPNVGKS), 57 to 61 (DTPGL), 119 to 122 (NKCE), 186 to 193 (GRPNAGKS), 233 to 237 (DTAGL), and 298 to 301 (NKWD) each bind GTP. A KH-like domain is found at 358–443 (KKITTSKLNE…PIRFTYVKTK (86 aa)).

This sequence belongs to the TRAFAC class TrmE-Era-EngA-EngB-Septin-like GTPase superfamily. EngA (Der) GTPase family. In terms of assembly, associates with the 50S ribosomal subunit.

Its function is as follows. GTPase that plays an essential role in the late steps of ribosome biogenesis. This chain is GTPase Der, found in Rickettsia felis (strain ATCC VR-1525 / URRWXCal2) (Rickettsia azadi).